Reading from the N-terminus, the 153-residue chain is Pheromone-binding protein Gp-9 (153 aa).

The first 19 residues, 1–19 (MKTFVLHIFIFALVAFASA), serve as a signal peptide directing secretion. Disulfide bonds link C37–C77, C73–C129, and C118–C138.

Belongs to the PBP/GOBP family. In terms of assembly, homodimer.

Its subcellular location is the secreted. Colony queen number, a major feature of social organization, is associated with worker genotype for Gp-9. Colonies are headed by either a single reproductive queen (monogyne form) or multiple queens (polygyne form). Differences in worker Gp-9 genotypes between social forms may cause differences in workers' abilities to recognize queens and regulate their numbers. The polypeptide is Pheromone-binding protein Gp-9 (Solenopsis electra (Fire ant)).